The chain runs to 349 residues: Farnesyl pyrophosphate synthase (349 aa).

Isopentenyl diphosphate is bound by residues K48, R51, and Q90. The Mg(2+) site is built by D97 and D101. Residue R106 participates in dimethylallyl diphosphate binding. R107 contacts isopentenyl diphosphate. Residues K194, T195, Q234, K251, and K260 each contribute to the dimethylallyl diphosphate site.

This sequence belongs to the FPP/GGPP synthase family. Requires Mg(2+) as cofactor.

It is found in the cytoplasm. It catalyses the reaction isopentenyl diphosphate + dimethylallyl diphosphate = (2E)-geranyl diphosphate + diphosphate. The enzyme catalyses isopentenyl diphosphate + (2E)-geranyl diphosphate = (2E,6E)-farnesyl diphosphate + diphosphate. Its pathway is isoprenoid biosynthesis; farnesyl diphosphate biosynthesis; farnesyl diphosphate from geranyl diphosphate and isopentenyl diphosphate: step 1/1. It participates in isoprenoid biosynthesis; geranyl diphosphate biosynthesis; geranyl diphosphate from dimethylallyl diphosphate and isopentenyl diphosphate: step 1/1. In terms of biological role, catalyzes the sequential condensation of isopentenyl pyrophosphate with the allylic pyrophosphates, dimethylallyl pyrophosphate, and then with the resultant geranylpyrophosphate to the ultimate product farnesyl pyrophosphate. The sequence is that of Farnesyl pyrophosphate synthase (FPS1) from Kluyveromyces lactis (strain ATCC 8585 / CBS 2359 / DSM 70799 / NBRC 1267 / NRRL Y-1140 / WM37) (Yeast).